The following is a 204-amino-acid chain: ATP synthase subunit b 2 (204 aa).

A helical membrane pass occupies residues 50-70 (IFWLAVTFGLLLFLMSKVALP).

The protein belongs to the ATPase B chain family. In terms of assembly, F-type ATPases have 2 components, F(1) - the catalytic core - and F(0) - the membrane proton channel. F(1) has five subunits: alpha(3), beta(3), gamma(1), delta(1), epsilon(1). F(0) has three main subunits: a(1), b(2) and c(10-14). The alpha and beta chains form an alternating ring which encloses part of the gamma chain. F(1) is attached to F(0) by a central stalk formed by the gamma and epsilon chains, while a peripheral stalk is formed by the delta and b chains.

The protein localises to the cell inner membrane. Its function is as follows. F(1)F(0) ATP synthase produces ATP from ADP in the presence of a proton or sodium gradient. F-type ATPases consist of two structural domains, F(1) containing the extramembraneous catalytic core and F(0) containing the membrane proton channel, linked together by a central stalk and a peripheral stalk. During catalysis, ATP synthesis in the catalytic domain of F(1) is coupled via a rotary mechanism of the central stalk subunits to proton translocation. Component of the F(0) channel, it forms part of the peripheral stalk, linking F(1) to F(0). The b'-subunit is a diverged and duplicated form of b found in plants and photosynthetic bacteria. This is ATP synthase subunit b 2 (atpF2) from Rhodospirillum centenum (strain ATCC 51521 / SW).